A 139-amino-acid chain; its full sequence is Actin-depolymerizing factor 7 (139 aa).

An ADF-H domain is found at 7 to 139 (GMAVDDECKL…GLDVIRGRAN (133 aa)).

Belongs to the actin-binding proteins ADF family.

Its function is as follows. Actin-depolymerizing protein. Severs actin filaments (F-actin) and binds to actin monomers. The chain is Actin-depolymerizing factor 7 (ADF7) from Oryza sativa subsp. japonica (Rice).